A 197-amino-acid polypeptide reads, in one-letter code: Phospholipid hydroperoxide glutathione peroxidase (197 aa).

Ser40 is subject to Phosphoserine. Sec73 is a catalytic residue. Sec73 is a non-standard amino acid (selenocysteine).

The protein belongs to the glutathione peroxidase family. Monomer. Has a tendency to form higher mass oligomers. Interacts with FUNDC1; this interaction promotes GPX4 recruitment into mitochondria through TOM/TIM complex where it is degraded by mitophagy.

Its subcellular location is the mitochondrion. The protein resides in the cytoplasm. The catalysed reaction is a hydroperoxy polyunsaturated fatty acid + 2 glutathione = a hydroxy polyunsaturated fatty acid + glutathione disulfide + H2O. It catalyses the reaction (12S)-hydroperoxy-(5Z,8Z,10E,14Z)-eicosatetraenoate + 2 glutathione = (12S)-hydroxy-(5Z,8Z,10E,14Z)-eicosatetraenoate + glutathione disulfide + H2O. The enzyme catalyses (13S)-hydroperoxy-(9Z,11E)-octadecadienoate + 2 glutathione = (13S)-hydroxy-(9Z,11E)-octadecadienoate + glutathione disulfide + H2O. In terms of biological role, essential antioxidant peroxidase that directly reduces phospholipid hydroperoxide even if they are incorporated in membranes and lipoproteins. Can also reduce fatty acid hydroperoxide, cholesterol hydroperoxide and thymine hydroperoxide. Plays a key role in protecting cells from oxidative damage by preventing membrane lipid peroxidation. Required to prevent cells from ferroptosis, a non-apoptotic cell death resulting from an iron-dependent accumulation of lipid reactive oxygen species. The presence of selenocysteine (Sec) versus Cys at the active site is essential for life: it provides resistance to overoxidation and prevents cells against ferroptosis. The presence of Sec at the active site is also essential for the survival of a specific type of parvalbumin-positive interneurons, thereby preventing against fatal epileptic seizures. May be required to protect cells from the toxicity of ingested lipid hydroperoxides. Required for normal sperm development and male fertility. Essential for maturation and survival of photoreceptor cells. Plays a role in a primary T-cell response to viral and parasitic infection by protecting T-cells from ferroptosis and by supporting T-cell expansion. Plays a role of glutathione peroxidase in platelets in the arachidonic acid metabolism. Reduces hydroperoxy ester lipids formed by a 15-lipoxygenase that may play a role as down-regulator of the cellular 15-lipoxygenase pathway. This Sapajus apella (Brown-capped capuchin) protein is Phospholipid hydroperoxide glutathione peroxidase.